A 232-amino-acid chain; its full sequence is MSDDSSDSTDAPGTSRSRDSGLTERQRTILDVIRASVTTRGYPPSIREIGDAVGLTSTSSVAHQLRTLERKGYLRRDANRPRAVDVRAADDHPTPIVATEVAGSDALPEPTFVPVLGRIAAGGPILAEEAVEDVFPLPRELVGEGSLFLLKVVGESMVDAAICDGDWVVVRQQSVADNGDIVAAMIDGEATVKTFKRTKGQVWLMPHNPAFDPIPGNDAAILGKVVTVIRKI.

Residues 1–25 form a disordered region; sequence MSDDSSDSTDAPGTSRSRDSGLTER. Residues 16 to 25 are compositionally biased toward basic and acidic residues; the sequence is RSRDSGLTER. The H-T-H motif DNA-binding region spans 46 to 66; the sequence is IREIGDAVGLTSTSSVAHQLR. Active-site for autocatalytic cleavage activity residues include serine 156 and lysine 193.

It belongs to the peptidase S24 family. Homodimer.

The enzyme catalyses Hydrolysis of Ala-|-Gly bond in repressor LexA.. Its function is as follows. Represses a number of genes involved in the response to DNA damage (SOS response), including recA and lexA. In the presence of single-stranded DNA, RecA interacts with LexA causing an autocatalytic cleavage which disrupts the DNA-binding part of LexA, leading to derepression of the SOS regulon and eventually DNA repair. The protein is LexA repressor of Mycolicibacterium gilvum (strain PYR-GCK) (Mycobacterium gilvum (strain PYR-GCK)).